The chain runs to 239 residues: 7-cyano-7-deazaguanine synthase (239 aa).

7-17 (LSGGIDSSTLL) lines the ATP pocket. Residues Cys184, Cys192, Cys195, and Cys198 each coordinate Zn(2+).

The protein belongs to the QueC family. Requires Zn(2+) as cofactor.

The enzyme catalyses 7-carboxy-7-deazaguanine + NH4(+) + ATP = 7-cyano-7-deazaguanine + ADP + phosphate + H2O + H(+). It participates in purine metabolism; 7-cyano-7-deazaguanine biosynthesis. Catalyzes the ATP-dependent conversion of 7-carboxy-7-deazaguanine (CDG) to 7-cyano-7-deazaguanine (preQ(0)). The chain is 7-cyano-7-deazaguanine synthase from Archaeoglobus fulgidus (strain ATCC 49558 / DSM 4304 / JCM 9628 / NBRC 100126 / VC-16).